We begin with the raw amino-acid sequence, 342 residues long: Probable alcohol acetyltransferase (342 aa).

A mitochondrion-targeting transit peptide spans 1 to 38 (MMILGKAGILAQYGTIYVRQNTIRNNLSSCIFKQSLCA). Positions 39–46 (FHSLAKVL) are cleaved as a propeptide — removed in mature form. The AB hydrolase-1 domain occupies 75 to 326 (PPIIILHGLF…AGHWVNAEKP (252 aa)). Residues Ser152 and His319 each act as charge relay system in the active site.

This sequence belongs to the AB hydrolase superfamily. In terms of processing, processed by both the mitochondrial processing peptidase (MPP) and the mitochondrial octapeptidyl aminopeptidase (OCT1).

It is found in the mitochondrion. Functionally, probable alcohol acetyltransferase that uses acetyl-CoA to synthesize acetate esters from various alcohols. Not involved in the synthesis of ethyl acetate. In Saccharomyces cerevisiae (strain ATCC 204508 / S288c) (Baker's yeast), this protein is Probable alcohol acetyltransferase (IMO32).